The chain runs to 73 residues: Putative antitoxin VapB9 (73 aa).

Functionally, antitoxin component of a possible type II toxin-antitoxin (TA) system. The cognate toxin is VapC9. The polypeptide is Putative antitoxin VapB9 (vapB9) (Mycobacterium tuberculosis (strain CDC 1551 / Oshkosh)).